Consider the following 363-residue polypeptide: Guanine nucleotide-binding protein alpha-11 subunit (363 aa).

The G-alpha domain occupies 26 to 363 (KMLKILLLGG…KISMEKVGFM (338 aa)). Residues 29–42 (KILLLGGPECGKST) are G1 motif. GTP-binding positions include 34-41 (GGPECGKS), 172-178 (LRARVPT), 197-201 (DVGGQ), 276-279 (NKID), and A335. Mg(2+)-binding residues include S41 and T178. A G2 motif region spans residues 170–178 (DVLRARVPT). The G3 motif stretch occupies residues 193 to 202 (LRMVDVGGQR). Residues 272–279 (ILFLNKID) are G4 motif. The tract at residues 333 to 338 (TNATDT) is G5 motif.

This sequence belongs to the G-alpha family. As to quaternary structure, g proteins are composed of 3 units; alpha, beta and gamma. The alpha chain contains the guanine nucleotide binding site. In terms of tissue distribution, expressed in ADL and ASH neurons.

Guanine nucleotide-binding proteins (G proteins) are involved as modulators or transducers in various transmembrane signaling systems. Mediates the transduction of food and serotonin signals, which modulates the avoidance response to the odorant octanol. Has a role in lifespan to promote longevity. This Caenorhabditis elegans protein is Guanine nucleotide-binding protein alpha-11 subunit (gpa-11).